The primary structure comprises 146 residues: Transcriptional regulator MraZ (146 aa).

SpoVT-AbrB domains lie at 5 to 52 (SAAL…PRAE) and 81 to 124 (AAEI…KEES).

Belongs to the MraZ family. Forms oligomers.

It is found in the cytoplasm. The protein resides in the nucleoid. This chain is Transcriptional regulator MraZ, found in Alcanivorax borkumensis (strain ATCC 700651 / DSM 11573 / NCIMB 13689 / SK2).